We begin with the raw amino-acid sequence, 593 residues long: NADH-quinone oxidoreductase subunit C/D (593 aa).

The NADH dehydrogenase I subunit C stretch occupies residues 1–184; it reads MTADNALYIP…DPYSLTLAKQ (184 aa). The segment at 208–593 is NADH dehydrogenase I subunit D; it reads DYMFLNLGPN…IDFVMADVDR (386 aa).

In the N-terminal section; belongs to the complex I 30 kDa subunit family. It in the C-terminal section; belongs to the complex I 49 kDa subunit family. As to quaternary structure, NDH-1 is composed of 13 different subunits. Subunits NuoB, CD, E, F, and G constitute the peripheral sector of the complex.

It localises to the cell inner membrane. The enzyme catalyses a quinone + NADH + 5 H(+)(in) = a quinol + NAD(+) + 4 H(+)(out). Its function is as follows. NDH-1 shuttles electrons from NADH, via FMN and iron-sulfur (Fe-S) centers, to quinones in the respiratory chain. The immediate electron acceptor for the enzyme in this species is believed to be ubiquinone. Couples the redox reaction to proton translocation (for every two electrons transferred, four hydrogen ions are translocated across the cytoplasmic membrane), and thus conserves the redox energy in a proton gradient. This is NADH-quinone oxidoreductase subunit C/D from Pseudomonas syringae pv. tomato (strain ATCC BAA-871 / DC3000).